A 752-amino-acid polypeptide reads, in one-letter code: Multifunctional tryptophan biosynthesis protein (752 aa).

A Glutamine amidotransferase type-1 domain is found at 3-202 (FTLLIDNYDS…IQMKGGKWGG (200 aa)). 58 to 60 (GPG) lines the L-glutamine pocket. Cysteine 86 serves as the catalytic Nucleophile; for GATase activity. Residue 136-137 (SL) participates in L-glutamine binding. Catalysis depends on for GATase activity residues histidine 176 and glutamate 178. Residues 231–495 (ILNRIHAQRL…DTKAFLRSLI (265 aa)) form an indole-3-glycerol phosphate synthase region. The N-(5'-phosphoribosyl)anthranilate isomerase stretch occupies residues 509 to 752 (LVKICGIRST…VEAFVKAVRG (244 aa)).

The catalysed reaction is N-(5-phospho-beta-D-ribosyl)anthranilate = 1-(2-carboxyphenylamino)-1-deoxy-D-ribulose 5-phosphate. It carries out the reaction 1-(2-carboxyphenylamino)-1-deoxy-D-ribulose 5-phosphate + H(+) = (1S,2R)-1-C-(indol-3-yl)glycerol 3-phosphate + CO2 + H2O. The enzyme catalyses chorismate + L-glutamine = anthranilate + pyruvate + L-glutamate + H(+). It participates in amino-acid biosynthesis; L-tryptophan biosynthesis; L-tryptophan from chorismate: step 1/5. The protein operates within amino-acid biosynthesis; L-tryptophan biosynthesis; L-tryptophan from chorismate: step 3/5. It functions in the pathway amino-acid biosynthesis; L-tryptophan biosynthesis; L-tryptophan from chorismate: step 4/5. Trifunctional enzyme bearing the Gln amidotransferase (GATase) domain of anthranilate synthase, indole-glycerolphosphate synthase, and phosphoribosylanthranilate isomerase activities. The protein is Multifunctional tryptophan biosynthesis protein (TRP1) of Cryptococcus neoformans var. neoformans serotype D (strain B-3501A) (Filobasidiella neoformans).